Consider the following 305-residue polypeptide: MKKIIFMGTPSYATCILKALVENENFKLVALFTQPDKAVGRKQILTPSDTKAFLSQNYPSIPIFTPSSLKDKNIIREIKDLNPDFIVVAAYGKILPKAILDLAPCVNLHASLLPKYRGASPIQSAILNKDEKSGVCTMLMEEGLDTGAILESLECDIKDKNSSEVFELLANLAAKLILSTLLNFDKITPKKQEESLATLCRKIKKEDGLINLQNARELYQKYLAFTPWPGVFLENGLKFLELELVDELKQNAKMGEILELEKESFLLACKQGVLRIKKLQESGKKALDGRTYLNGKRLKSEDSLC.

(6S)-5,6,7,8-tetrahydrofolate is bound at residue 111 to 114 (SLLP).

Belongs to the Fmt family.

It catalyses the reaction L-methionyl-tRNA(fMet) + (6R)-10-formyltetrahydrofolate = N-formyl-L-methionyl-tRNA(fMet) + (6S)-5,6,7,8-tetrahydrofolate + H(+). Attaches a formyl group to the free amino group of methionyl-tRNA(fMet). The formyl group appears to play a dual role in the initiator identity of N-formylmethionyl-tRNA by promoting its recognition by IF2 and preventing the misappropriation of this tRNA by the elongation apparatus. This Campylobacter jejuni (strain RM1221) protein is Methionyl-tRNA formyltransferase.